The chain runs to 96 residues: Large ribosomal subunit protein uL23 (96 aa).

This sequence belongs to the universal ribosomal protein uL23 family. Part of the 50S ribosomal subunit. Contacts protein L29, and trigger factor when it is bound to the ribosome.

In terms of biological role, one of the early assembly proteins it binds 23S rRNA. One of the proteins that surrounds the polypeptide exit tunnel on the outside of the ribosome. Forms the main docking site for trigger factor binding to the ribosome. This chain is Large ribosomal subunit protein uL23, found in Bacillus cereus (strain ATCC 10987 / NRS 248).